The following is a 157-amino-acid chain: Small ribosomal subunit protein uS7 (157 aa).

This sequence belongs to the universal ribosomal protein uS7 family. In terms of assembly, part of the 30S ribosomal subunit. Contacts proteins S9 and S11.

Its function is as follows. One of the primary rRNA binding proteins, it binds directly to 16S rRNA where it nucleates assembly of the head domain of the 30S subunit. Is located at the subunit interface close to the decoding center, probably blocks exit of the E-site tRNA. The chain is Small ribosomal subunit protein uS7 from Roseiflexus castenholzii (strain DSM 13941 / HLO8).